Consider the following 275-residue polypeptide: MFTKLIIAASLAASVAAHATFQELWINGVDQGSSCVRLPQSNSPVTSVSTPDLACNASPHPSDGICQVMPGDEVTVEMHQQPNDRSCATEAIGGDHYGPVLVYMAKVDDATTAVGSSAQWFKVAEIGLPSSNPDYWGTEVLNDNCGHYTFKVPSDIAPGNYLIRAEVIALHVASSIGGAQFYMSCYQVNVGGSGSANPPTVSIPGAYSATDPGILINIYEPLSTYTIPGPTPYATTSPAVANTPYPTTATWNTALQPSTVPTAVPTPGTPGIGKA.

The N-terminal stretch at 1-17 (MFTKLIIAASLAASVAA) is a signal peptide. H18 contributes to the Cu(2+) binding site. T20 carries the post-translational modification Phosphothreonine. S43 and S49 each carry phosphoserine. T50 is subject to Phosphothreonine. Residue S58 is modified to Phosphoserine. The cysteines at positions 66 and 185 are disulfide-linked. H96 lines the Cu(2+) pocket. S130 bears the Phosphoserine mark. Residues H171 and Q180 each contribute to the O2 site. Y182 provides a ligand contact to Cu(2+). The tract at residues 236-265 (TSPAVANTPYPTTATWNTALQPSTVPTAVP) is X282 extension. Positions 268 to 275 (GTPGIGKA) match the 9res motif motif.

Belongs to the polysaccharide monooxygenase AA9 family. Cu(2+) serves as cofactor.

The protein resides in the secreted. It carries out the reaction [(1-&gt;4)-beta-D-glucosyl]n+m + reduced acceptor + O2 = 4-dehydro-beta-D-glucosyl-[(1-&gt;4)-beta-D-glucosyl]n-1 + [(1-&gt;4)-beta-D-glucosyl]m + acceptor + H2O.. Lytic polysaccharide monooxygenase (LPMO) that depolymerizes crystalline and amorphous polysaccharides via the oxidation of scissile alpha- or beta-(1-4)-glycosidic bonds, yielding C1 oxidation products. Catalysis by LPMOs requires the reduction of the active-site copper from Cu(II) to Cu(I) by a reducing agent and H(2)O(2) or O(2) as a cosubstrate. Shows only weak binding properties to cellulose, and low cellulolytic oxidative activity which questions the involvement of X282 extension-containing AA9 proteins in the degradation of plant cell wall and opens new avenues as to the divergence of function of some AA9 members. This is AA9 family lytic polysaccharide monooxygenase AA9-X282 from Trametes coccinea (strain BRFM310) (Pycnoporus coccineus).